Here is a 178-residue protein sequence, read N- to C-terminus: Large ribosomal subunit protein bL25 (178 aa).

The protein belongs to the bacterial ribosomal protein bL25 family. CTC subfamily. In terms of assembly, part of the 50S ribosomal subunit; part of the 5S rRNA/L5/L18/L25 subcomplex. Contacts the 5S rRNA. Binds to the 5S rRNA independently of L5 and L18.

Its function is as follows. This is one of the proteins that binds to the 5S RNA in the ribosome where it forms part of the central protuberance. This chain is Large ribosomal subunit protein bL25, found in Campylobacter hominis (strain ATCC BAA-381 / DSM 21671 / CCUG 45161 / LMG 19568 / NCTC 13146 / CH001A).